Reading from the N-terminus, the 342-residue chain is S-adenosylmethionine:tRNA ribosyltransferase-isomerase (342 aa).

Belongs to the QueA family. Monomer.

It is found in the cytoplasm. The catalysed reaction is 7-aminomethyl-7-carbaguanosine(34) in tRNA + S-adenosyl-L-methionine = epoxyqueuosine(34) in tRNA + adenine + L-methionine + 2 H(+). It participates in tRNA modification; tRNA-queuosine biosynthesis. Transfers and isomerizes the ribose moiety from AdoMet to the 7-aminomethyl group of 7-deazaguanine (preQ1-tRNA) to give epoxyqueuosine (oQ-tRNA). This chain is S-adenosylmethionine:tRNA ribosyltransferase-isomerase, found in Campylobacter jejuni subsp. jejuni serotype O:6 (strain 81116 / NCTC 11828).